Here is a 95-residue protein sequence, read N- to C-terminus: ATP-dependent Clp protease adapter protein ClpS (95 aa).

This sequence belongs to the ClpS family. In terms of assembly, binds to the N-terminal domain of the chaperone ClpA.

Involved in the modulation of the specificity of the ClpAP-mediated ATP-dependent protein degradation. This Synechococcus elongatus (strain ATCC 33912 / PCC 7942 / FACHB-805) (Anacystis nidulans R2) protein is ATP-dependent Clp protease adapter protein ClpS.